Here is a 382-residue protein sequence, read N- to C-terminus: Mannitol-1-phosphate 5-dehydrogenase (382 aa).

3–14 (ALHFGAGNIGRG) contacts NAD(+). Lysine 269 carries the post-translational modification N6-acetyllysine.

The protein belongs to the mannitol dehydrogenase family.

It carries out the reaction D-mannitol 1-phosphate + NAD(+) = beta-D-fructose 6-phosphate + NADH + H(+). The polypeptide is Mannitol-1-phosphate 5-dehydrogenase (Escherichia coli O81 (strain ED1a)).